The chain runs to 67 residues: Theromin (67 aa).

Positions 2–27 (CENTECPRACPGEYEFDEDGCNTCVC) constitute an Antistasin-like domain.

In terms of assembly, homodimer. Post-translationally, eight disulfide bonds are present.

Its subcellular location is the secreted. Its function is as follows. Potent thrombin-specific inhibitor. This Theromyzon tessulatum (Duck leech) protein is Theromin.